The following is a 338-amino-acid chain: UPF0324 membrane protein TauZ (338 aa).

9 helical membrane-spanning segments follow: residues 36–55 (YGAP…NFLA), 75–92 (LGVA…LAAL), 96–118 (AIAL…SRLV), 125–147 (ALLT…AAVL), 162–184 (LSVT…LFGF), 223–245 (LIRV…ARGL), 255–277 (PLLP…GLIP), 290–309 (WALL…GKML), and 314–336 (GAIA…GLHL).

This sequence belongs to the UPF0324 family.

It localises to the cell membrane. This Paracoccus pantotrophus (Thiosphaera pantotropha) protein is UPF0324 membrane protein TauZ (tauZ).